We begin with the raw amino-acid sequence, 634 residues long: Kinesin-like protein KIF22 (634 aa).

A Kinesin motor domain is found at 19-345 (RVRVAVRLRP…LNFAAKSKQI (327 aa)). 103–110 (GPTGAGKT) is an ATP binding site. Positions 357 to 406 (APTIAPGKRTREEQEAGGSGEPQNKRSKEGKKAEHSPSPPLHPQSSPDSS) are disordered. Residues 379–391 (QNKRSKEGKKAEH) are compositionally biased toward basic and acidic residues. A coiled-coil region spans residues 421–471 (SAERERLNLLKTVAQSRKEIQMLKEKQKELEDKANMFNKQKETTEKESKDA).

This sequence belongs to the TRAFAC class myosin-kinesin ATPase superfamily. Kinesin family. Ubiquitinated, leading to its subsequent proteasomal degradation.

It localises to the nucleus. The protein resides in the cytoplasm. The protein localises to the cytoskeleton. Functionally, kinesin family member that is involved in spindle formation and the movements of chromosomes during mitosis and meiosis. Binds to microtubules and to DNA. The protein is Kinesin-like protein KIF22 (kif22) of Danio rerio (Zebrafish).